The chain runs to 338 residues: Adenylosuccinate synthetase (338 aa).

GTP-binding positions include 12–18 and 42–44; these read GDEGKGK and GHT. D13 acts as the Proton acceptor in catalysis. Mg(2+)-binding residues include D13 and G42. IMP is bound by residues 13 to 16, 40 to 43, T127, R141, Q179, T194, and R256; these read DEGK and NAGH. H43 acts as the Proton donor in catalysis. 252–258 serves as a coordination point for substrate; sequence TVTGRRR. GTP is bound by residues R258, 284-286, and 324-326; these read CLD and STG.

It belongs to the adenylosuccinate synthetase family. In terms of assembly, homodimer. The cofactor is Mg(2+).

It is found in the cytoplasm. The enzyme catalyses IMP + L-aspartate + GTP = N(6)-(1,2-dicarboxyethyl)-AMP + GDP + phosphate + 2 H(+). It participates in purine metabolism; AMP biosynthesis via de novo pathway; AMP from IMP: step 1/2. In terms of biological role, plays an important role in the de novo pathway of purine nucleotide biosynthesis. Catalyzes the first committed step in the biosynthesis of AMP from IMP. The sequence is that of Adenylosuccinate synthetase from Methanococcus maripaludis (strain DSM 14266 / JCM 13030 / NBRC 101832 / S2 / LL).